The sequence spans 378 residues: Ribosomal RNA large subunit methyltransferase G (378 aa).

The protein belongs to the methyltransferase superfamily. RlmG family.

Its subcellular location is the cytoplasm. It carries out the reaction guanosine(1835) in 23S rRNA + S-adenosyl-L-methionine = N(2)-methylguanosine(1835) in 23S rRNA + S-adenosyl-L-homocysteine + H(+). Specifically methylates the guanine in position 1835 (m2G1835) of 23S rRNA. This is Ribosomal RNA large subunit methyltransferase G from Escherichia coli (strain ATCC 8739 / DSM 1576 / NBRC 3972 / NCIMB 8545 / WDCM 00012 / Crooks).